Reading from the N-terminus, the 388-residue chain is Carbohydrate sulfotransferase 4 (388 aa).

The Cytoplasmic portion of the chain corresponds to 1 to 7; that stretch reads MMLLKKG. The chain crosses the membrane as a helical; Signal-anchor for type II membrane protein span at residues 8–28; it reads RLLMFLGSQVIVVALFIHMSV. Residues 29–388 lie on the Lumenal side of the membrane; that stretch reads HRHLSQREES…HILGQVFREG (360 aa). Residues 50–56 and 204–212 each bind 3'-phosphoadenylyl sulfate; these read WRSGSSF and RDPRAVFRS. N-linked (GlcNAc...) asparagine glycans are attached at residues N307, N328, and N369.

The protein belongs to the sulfotransferase 1 family. Gal/GlcNAc/GalNAc subfamily. In terms of assembly, monomer. Specifically expressed in high endothelial venules (HEV) of peripheral lymph nodes.

It is found in the golgi apparatus membrane. It catalyses the reaction 3-O-{N-acetyl-beta-D-glucosaminyl-(1-&gt;3)-beta-D-galactosyl-(1-&gt;3)-N-acetyl-alpha-D-galactosaminyl}-L-threonyl-[protein] + 3'-phosphoadenylyl sulfate = 3-O-{6-O-sulfo-N-acetyl-beta-D-glucosaminyl-(1-&gt;3)-beta-D-galactosyl-(1-&gt;3)-N-acetyl-alpha-D-galactosaminyl}-L-threonyl-[protein] + adenosine 3',5'-bisphosphate + H(+). The enzyme catalyses 3-O-{N-acetyl-beta-D-glucosaminyl-(1-&gt;3)-beta-D-galactosyl-(1-&gt;3)-N-acetyl-alpha-D-galactosaminyl}-L-seryl-[protein] + 3'-phosphoadenylyl sulfate = 3-O-{6-O-sulfo-N-acetyl-beta-D-glucosaminyl-(1-&gt;3)-beta-D-galactosyl-(1-&gt;3)-N-acetyl-alpha-D-galactosaminyl}-L-seryl-[protein] + adenosine 3',5'-bisphosphate + H(+). The catalysed reaction is a 3-O-{beta-D-galactosyl-(1-&gt;3)-[N-acetyl-beta-D-glucosaminyl-(1-&gt;6)]-N-acetyl-alpha-D-galactosaminyl}-L-threonyl-[protein] + 3'-phosphoadenylyl sulfate = 3-O-{beta-D-galactosyl-(1-&gt;3)-[6-O-sulfo-N-acetyl-beta-D-glucosaminyl-(1-&gt;6)]-N-acetyl-alpha-D-galactosaminyl}-L-threonyl-[protein] + adenosine 3',5'-bisphosphate + H(+). It carries out the reaction 3-O-{beta-D-galactosyl-(1-&gt;3)-[N-acetyl-beta-D-glucosaminyl-(1-&gt;6)]-N-acetyl-alpha-D-galactosaminyl}-L-seryl-[protein] + 3'-phosphoadenylyl sulfate = 3-O-{beta-D-galactosyl-(1-&gt;3)-[6-O-sulfo-N-acetyl-beta-D-glucosaminyl-(1-&gt;6)]-N-acetyl-alpha-D-galactosaminyl}-L-seryl-[protein] + adenosine 3',5'-bisphosphate + H(+). It functions in the pathway protein modification; carbohydrate sulfation. In terms of biological role, sulfotransferase involved in SELL/L-selectin ligand biosynthesis pathway. Catalyzes the transfer of the sulfate group from 3'-phospho-5'-adenylyl sulfate (PAPS) onto the hydroxyl group at C-6 position of the non-reducing N-acetylglucosamine (GlcNAc) residue within O-linked mucin-type glycans. Contributes to generate sialyl 6-sulfo Lewis X determinant (also known as MECA-79 epitope) for SELL recognition, a prerequisite for continuous lymphocyte homing into peripheral lymph nodes and antigen immune surveillance. Transfers the sulfate group primarily on core 2 GlcNAcbeta1-6(Galbeta1-3)GalNAcalphaSer/Thr and extended core 1 GlcNAcbeta1-3Galbeta1-3GalNAcalphaSer/Thr based O-linked glycans on CD34 and GLYCAM1 peripheral node addressins (PNAds) expressed on the lumenal side of high endothelial venules (HEVs). The recognition of PNAds by SELL initiates a multistep process comprising tethering and rolling of blood lymphocytes on HEVs against the blood flow, followed by chemokine signaling, integrin-mediated lymphocyte adhesion onto endothelial cells and lymphocyte transendothelial migration. Modulates rolling velocity and differential T and B lymphocyte recruitment into peripheral lymph nodes, with a major role in B lymphocyte homing. Might be redundant in sulfation of MADCAM1 and lymphocyte trafficking to mesenteric lymph nodes. Can also sulfonate core 3 GlcNAcbeta1-3GalNAc-R based glycans as well as GlcNAcbeta1-3Galbeta1-Glc, GlcNAcbeta1-6ManOMe and GlcNAcbeta1-2Man oligosaccharides, which might be ectopically expressed during tumorigenesis. This Mus musculus (Mouse) protein is Carbohydrate sulfotransferase 4 (Chst4).